The sequence spans 621 residues: SH2B adapter protein 2 (621 aa).

Tyr-47 is subject to Phosphotyrosine. The residue at position 130 (Ser-130) is a Phosphoserine. A disordered region spans residues Arg-144–Arg-165. Positions Asp-186 to Asp-299 constitute a PH domain. Position 303 is a phosphoserine (Ser-303). An SH2 domain is found at Trp-409 to Val-507. Disordered regions lie at residues Val-507 to Ala-528 and Pro-548 to Gly-609. Positions Pro-552–Ser-570 are enriched in low complexity. A Phosphoserine modification is found at Ser-597. At Tyr-618 the chain carries Phosphotyrosine.

This sequence belongs to the SH2B adapter family. Homodimer. Interacts with KIT/c-KIT, SHC1, EPOR, PDGFR, VAV1 and VAV3. Interacts (via N-terminal region) with SHC1. Interacts (via the phosphorylated C-terminus) with GRB2. Interacts (via its SH2 domain) with EPOR, INSR and KIT. Interacts with GRB2 after B-cell antigen receptor stimulation. Interacts (via PH domain) with VAV3. Interacts with NTRK1, NTRK2 and NTRK3 (phosphorylated); after stimulation of the receptor by its extracellular ligand and subsequent autophosphorylation of the receptor. Binds INSR, GRB2, ASB6 and CAP. Insulin stimulation leads to dissociation of CAP. Binds CBS only when SH2B2/APS has become phosphorylated. INSR binding does not depend on the phosphorylation of SH2B2/APS. In terms of processing, phosphorylated on a tyrosine residue by NTRK1, NTRK2, NTRK3 and INSR after stimulation of the receptor by its extracellular ligand. Tyrosine phosphorylated by JAK2, KIT and other kinases activated by B-cell receptor in response to stimulation with cytokines, IL3, IL5, PDGF, IGF1, IGF2, CSF2/GM-CSF and cross-linking of the B-cell receptor complex. In terms of tissue distribution, detected in embryonic brain, spinal cord and cortical neurons.

Its subcellular location is the cytoplasm. It localises to the membrane. Functionally, adapter protein for several members of the tyrosine kinase receptor family. Involved in multiple signaling pathways. Binds to EPOR and suppresses EPO-induced STAT5 activation, possibly through a masking effect on STAT5 docking sites in EPOR. Suppresses PDGF-induced mitogenesis. Involved in stimulation of glucose uptake by insulin. Involved in coupling from immunoreceptor to Ras signaling. Acts as a negative regulator of cytokine signaling in collaboration with CBL. Induces cytoskeletal reorganization and neurite outgrowth in cultured neurons. This Rattus norvegicus (Rat) protein is SH2B adapter protein 2 (Sh2b2).